The primary structure comprises 157 residues: Small ribosomal subunit protein uS7 (157 aa).

It belongs to the universal ribosomal protein uS7 family. Part of the 30S ribosomal subunit. Contacts proteins S9 and S11.

In terms of biological role, one of the primary rRNA binding proteins, it binds directly to 16S rRNA where it nucleates assembly of the head domain of the 30S subunit. Is located at the subunit interface close to the decoding center, probably blocks exit of the E-site tRNA. The chain is Small ribosomal subunit protein uS7 from Albidiferax ferrireducens (strain ATCC BAA-621 / DSM 15236 / T118) (Rhodoferax ferrireducens).